The following is a 275-amino-acid chain: Large ribosomal subunit protein uL2 (275 aa).

Disordered regions lie at residues 1–20 and 214–275; these read MAVK…TTAD and WLGR…TRRK. Residues 255–275 show a composition bias toward basic residues; sequence KGLKTRRKRKTSDRFIVTRRK.

It belongs to the universal ribosomal protein uL2 family. In terms of assembly, part of the 50S ribosomal subunit. Forms a bridge to the 30S subunit in the 70S ribosome.

Its function is as follows. One of the primary rRNA binding proteins. Required for association of the 30S and 50S subunits to form the 70S ribosome, for tRNA binding and peptide bond formation. It has been suggested to have peptidyltransferase activity; this is somewhat controversial. Makes several contacts with the 16S rRNA in the 70S ribosome. In Deinococcus radiodurans (strain ATCC 13939 / DSM 20539 / JCM 16871 / CCUG 27074 / LMG 4051 / NBRC 15346 / NCIMB 9279 / VKM B-1422 / R1), this protein is Large ribosomal subunit protein uL2 (rplB).